The sequence spans 283 residues: MTASHGQAAAIPTVTLNDDNTLPVVGIGVGELSDSEAERSVSAALEAGYRLIDTAAAYGNEAAVGRAIAASGIPRDEIYVTTKLATPDQGFTSSQAAARASLERLGLDYVDLYLIHWPGGDTSKYVDSWGGLMKVKEDGIARSIGVCNFGAEDLETIVSLTYFTPAVNQIELHPLLNQAALREVNAGYNIVTEAYGPLGVGRLLDHPAVTAIAEAHGRTAAQVLLRWSIQLGNVVISRSANPERIASNLDVFGFELTADEMETLNGLDDGTRFRPDPATYTGS.

Tyr58 functions as the Proton donor in the catalytic mechanism. Gly196, Leu198, Val200, Ile236, Arg238, Ser239, Ala240, Arg244, Ser247, Asn248, and Arg274 together coordinate NADPH.

It belongs to the aldo/keto reductase family. Monomer.

Inhibited by the antituberculosis drug isoniazid (INH). Its function is as follows. Catalyzes the NADPH-dependent reduction of dicarbonyls. Exhibits narrow substrate specificity, with preferential activity against the dicarbonyl substrates phenylglyoxal and methylglyoxal. Exhibits weak activity with ethyl-2-methyl acetoacetate. Cannot use NADH. May play an important role in the detoxification of methylglyoxal. This is Aldo-keto reductase MSMEG_2407/MSMEI_2346 from Mycolicibacterium smegmatis (strain ATCC 700084 / mc(2)155) (Mycobacterium smegmatis).